The chain runs to 1064 residues: Carbamoyl phosphate synthase large chain (1064 aa).

The interval 1–401 (MPKRADIKKI…ALMKAIRSLE (401 aa)) is carboxyphosphate synthetic domain. The ATP site is built by arginine 129, arginine 169, glycine 175, glycine 176, lysine 208, isoleucine 210, glutamate 215, glycine 241, isoleucine 242, histidine 243, glutamine 284, and glutamate 298. The region spanning 133-327 (KQLMEALKEP…IAKMAAKIAI (195 aa)) is the ATP-grasp 1 domain. Residues glutamine 284, glutamate 298, and asparagine 300 each coordinate Mg(2+). Residues glutamine 284, glutamate 298, and asparagine 300 each coordinate Mn(2+). Residues 402-546 (IGTFALDDLT…YSTYELENES (145 aa)) are oligomerization domain. Residues 547–929 (LKEKRPSVLV…ALYKAFVAAG (383 aa)) are carbamoyl phosphate synthetic domain. Residues 671-861 (NQVIKKLDLS…LAQLATRVML (191 aa)) enclose the ATP-grasp 2 domain. The ATP site is built by arginine 707, serine 746, leucine 748, glutamate 752, glycine 777, valine 778, histidine 779, serine 780, glutamine 820, and glutamate 832. Glutamine 820, glutamate 832, and asparagine 834 together coordinate Mg(2+). The Mn(2+) site is built by glutamine 820, glutamate 832, and asparagine 834. Residues 930–1064 (FKVHEHGNVL…VSAINKGDKS (135 aa)) form the MGS-like domain. The allosteric domain stretch occupies residues 930–1064 (FKVHEHGNVL…VSAINKGDKS (135 aa)).

It belongs to the CarB family. In terms of assembly, composed of two chains; the small (or glutamine) chain promotes the hydrolysis of glutamine to ammonia, which is used by the large (or ammonia) chain to synthesize carbamoyl phosphate. Tetramer of heterodimers (alpha,beta)4. The cofactor is Mg(2+). It depends on Mn(2+) as a cofactor.

The catalysed reaction is hydrogencarbonate + L-glutamine + 2 ATP + H2O = carbamoyl phosphate + L-glutamate + 2 ADP + phosphate + 2 H(+). The enzyme catalyses hydrogencarbonate + NH4(+) + 2 ATP = carbamoyl phosphate + 2 ADP + phosphate + 2 H(+). The protein operates within amino-acid biosynthesis; L-arginine biosynthesis; carbamoyl phosphate from bicarbonate: step 1/1. It functions in the pathway pyrimidine metabolism; UMP biosynthesis via de novo pathway; (S)-dihydroorotate from bicarbonate: step 1/3. Functionally, large subunit of the glutamine-dependent carbamoyl phosphate synthetase (CPSase). CPSase catalyzes the formation of carbamoyl phosphate from the ammonia moiety of glutamine, carbonate, and phosphate donated by ATP, constituting the first step of 2 biosynthetic pathways, one leading to arginine and/or urea and the other to pyrimidine nucleotides. The large subunit (synthetase) binds the substrates ammonia (free or transferred from glutamine from the small subunit), hydrogencarbonate and ATP and carries out an ATP-coupled ligase reaction, activating hydrogencarbonate by forming carboxy phosphate which reacts with ammonia to form carbamoyl phosphate. This Oenococcus oeni (strain ATCC BAA-331 / PSU-1) protein is Carbamoyl phosphate synthase large chain.